An 875-amino-acid chain; its full sequence is Neurotrypsin (875 aa).

The signal sequence occupies residues 1 to 20 (MTLARFALALLFGVLPEVVG). The N-linked (GlcNAc...) asparagine glycan is linked to asparagine 26. Positions 51–72 (QRHRRTRPPPPLPRFPRPPRAL) are disordered. The segment covering 58-71 (PPPPLPRFPRPPRA) has biased composition (pro residues). The Kringle domain maps to 93 to 165 (CPAGEPWVSV…GKVDWGYCDC (73 aa)). Intrachain disulfides connect cysteine 93-cysteine 165, cysteine 109-cysteine 149, cysteine 138-cysteine 163, cysteine 195-cysteine 259, cysteine 208-cysteine 269, cysteine 239-cysteine 249, cysteine 305-cysteine 369, cysteine 318-cysteine 379, cysteine 349-cysteine 359, cysteine 412-cysteine 475, cysteine 425-cysteine 485, cysteine 455-cysteine 465, cysteine 525-cysteine 589, cysteine 538-cysteine 599, cysteine 569-cysteine 579, cysteine 619-cysteine 750, cysteine 661-cysteine 677, cysteine 765-cysteine 831, cysteine 794-cysteine 808, and cysteine 821-cysteine 850. 4 consecutive SRCR domains span residues 170 to 271 (VRLR…MCSF), 280 to 381 (IRLV…SCTP), 387 to 487 (IRLA…ACYP), and 500 to 601 (VRLM…ICDY). A zymogen activation region region spans residues 619–630 (CGLRLLHRRQKR). A Peptidase S1 domain is found at 631 to 874 (IIGGKNSLRG…FVPWIKSVTK (244 aa)). Histidine 676 serves as the catalytic Charge relay system. Residue asparagine 683 is glycosylated (N-linked (GlcNAc...) asparagine). Residue aspartate 726 is the Charge relay system of the active site. The active-site Charge relay system is serine 825.

It belongs to the peptidase S1 family.

It localises to the secreted. In terms of biological role, plays a role in neuronal plasticity and the proteolytic action may subserve structural reorganizations associated with learning and memory operations. This chain is Neurotrypsin (PRSS12), found in Saguinus labiatus (Red-chested mustached tamarin).